Consider the following 104-residue polypeptide: MSQPDMNQLMQQAQQMQAQLQEAQREIAASTVKGEAGNGLVTISVAGSGEVTDMEIDPKIVDPEDIDTLKDLLLGAFKDANQKLQTLAEEKMGPLSQGMSGLGF.

This sequence belongs to the YbaB/EbfC family. As to quaternary structure, homodimer.

It localises to the cytoplasm. It is found in the nucleoid. Binds to DNA and alters its conformation. May be involved in regulation of gene expression, nucleoid organization and DNA protection. The chain is Nucleoid-associated protein jk2011 from Corynebacterium jeikeium (strain K411).